We begin with the raw amino-acid sequence, 134 residues long: UPF0357 protein YCL012C (134 aa).

The first 23 residues, 1 to 23, serve as a signal peptide directing secretion; sequence MKSLFYLKLLLWVVLLSLCLLMA. A phosphoserine mark is found at Ser71 and Ser74. Lys86 is covalently cross-linked (Glycyl lysine isopeptide (Lys-Gly) (interchain with G-Cter in ubiquitin)).

It belongs to the UPF0357 family.

This chain is UPF0357 protein YCL012C, found in Saccharomyces cerevisiae (strain ATCC 204508 / S288c) (Baker's yeast).